A 405-amino-acid chain; its full sequence is Prostaglandin E2 receptor EP1 subtype (405 aa).

Topologically, residues 1–39 are extracellular; that stretch reads MSPYGLNLSLVDEATTCVTPRVPNTSVVLPTGGNGTSPA. 3 N-linked (GlcNAc...) asparagine glycosylation sites follow: Asn7, Asn24, and Asn34. A helical transmembrane segment spans residues 40 to 62; that stretch reads LPIFSMTLGAVSNVLALALLAQV. At 63–80 the chain is on the cytoplasmic side; that stretch reads AGRLRRRRSTATFLLFVA. The chain crosses the membrane as a helical span at residues 81–99; the sequence is SLLAIDLAGHVIPGALVLR. The Extracellular portion of the chain corresponds to 100-113; that stretch reads LYTAGRAPAGGACH. Residues Cys112 and Cys190 are joined by a disulfide bond. The helical transmembrane segment at 114–135 threads the bilayer; the sequence is FLGGCMVFFGLCPLLLGCGMAV. Residues 136–157 are Cytoplasmic-facing; the sequence is ERCVGVTQPLIHAARVSVARAR. The helical transmembrane segment at 158–179 threads the bilayer; that stretch reads LALALLAAMALAVALLPLVHVG. At 180–202 the chain is on the extracellular side; the sequence is HYELQYPGTWCFISLGPPGGWRQ. The chain crosses the membrane as a helical span at residues 203–228; that stretch reads ALLAGLFAGLGLAALLAALVCNTLSG. The Cytoplasmic segment spans residues 229 to 301; the sequence is LALLRARWRR…HAHDVEMVGQ (73 aa). Residues 302–323 traverse the membrane as a helical segment; it reads LVGIMVVSCICWSPLLVLVVLA. The Extracellular portion of the chain corresponds to 324 to 337; sequence IGGWNSNSLQRPLF. The helical transmembrane segment at 338-357 threads the bilayer; sequence LAVRLASWNQILDPWVYILL. Residues 358–405 are Cytoplasmic-facing; sequence RQAMLRQLLRLLPLRVSAKGGPTELSLTKSAWEASSLRSSRHSGFSHL.

The protein belongs to the G-protein coupled receptor 1 family. Phosphorylated. Highly abundant in kidney and lung. Found in a lesser extent in spleen, colon, and thymus. Also expressed in uterine myometrium and endometrium.

The protein resides in the cell membrane. Receptor for prostaglandin E2 (PGE2). The activity of this receptor is mediated by G(q) proteins which activate a phosphatidylinositol-calcium second messenger system. May play a role as an important modulator of renal function. Implicated the smooth muscle contractile response to PGE2 in various tissues. Isoform 1 and isoform 2 have identical ligand binding properties, but isoform 2 lacks coupling to calcium mobilization and may therefore attenuate the action of PGE2 on tissues. The protein is Prostaglandin E2 receptor EP1 subtype (Ptger1) of Rattus norvegicus (Rat).